Consider the following 262-residue polypeptide: Phosphonates import ATP-binding protein PhnC (262 aa).

In terms of domain architecture, ABC transporter spans 5 to 253 (IRVEKLAKTF…RFDHLYRSIN (249 aa)). Position 37 to 44 (37 to 44 (GPSGSGKS)) interacts with ATP.

Belongs to the ABC transporter superfamily. Phosphonates importer (TC 3.A.1.9.1) family. As to quaternary structure, the complex is composed of two ATP-binding proteins (PhnC), two transmembrane proteins (PhnE) and a solute-binding protein (PhnD).

It is found in the cell inner membrane. The enzyme catalyses phosphonate(out) + ATP + H2O = phosphonate(in) + ADP + phosphate + H(+). Part of the ABC transporter complex PhnCDE involved in phosphonates import. Responsible for energy coupling to the transport system. The protein is Phosphonates import ATP-binding protein PhnC of Shigella dysenteriae serotype 1 (strain Sd197).